A 254-amino-acid polypeptide reads, in one-letter code: Glycerol operon regulatory protein (254 aa).

The region spanning 5 to 67 is the HTH iclR-type domain; that stretch reads IQSLERAAAM…PASGRYQLGA (63 aa). A DNA-binding region (H-T-H motif) is located at residues 27 to 46; the sequence is LSDIASTLGLAKGTAHGILR. Residues 82-251 form the IclR-ED domain; sequence LRARALVWTD…AAAVSRDLGA (170 aa).

Functionally, may be an activator protein for the gylABX operon. In Streptomyces griseus, this protein is Glycerol operon regulatory protein (gylR).